We begin with the raw amino-acid sequence, 433 residues long: N-lysine methyltransferase SMYD2 (433 aa).

Positions 7-241 (GGLERFCSPG…PGEEVFTSYI (235 aa)) constitute an SET domain. 17–19 (KGR) provides a ligand contact to S-adenosyl-L-methionine. Zn(2+)-binding residues include Cys52, Cys55, Cys65, Cys68, Cys74, Cys78, His86, and Cys90. The MYND-type zinc-finger motif lies at 52–90 (CEFCFARKEGLSKCGRCKQAFYCNVECQKEDWPMHKLEC). Residues His137, 206–207 (NH), and 258–260 (YFF) contribute to the S-adenosyl-L-methionine site.

The protein belongs to the class V-like SAM-binding methyltransferase superfamily. As to quaternary structure, interacts with RNA polymerase II and HELZ. Interacts with SIN3A and HDAC1. Interacts (via MYND-type zinc finger) with EPB41L3. Interacts (via SET domain) with p53/TP53. Interacts with RB1 and HSP90AA1.

It is found in the cytoplasm. The protein localises to the cytosol. The protein resides in the nucleus. The catalysed reaction is L-lysyl(4)-[histone H3] + 3 S-adenosyl-L-methionine = N(6),N(6),N(6)-trimethyl-L-lysyl(4)-[histone H3] + 3 S-adenosyl-L-homocysteine + 3 H(+). It catalyses the reaction L-lysyl-[protein] + S-adenosyl-L-methionine = N(6)-methyl-L-lysyl-[protein] + S-adenosyl-L-homocysteine + H(+). In terms of biological role, protein-lysine N-methyltransferase that methylates both histones and non-histone proteins, including p53/TP53 and RB1. Specifically trimethylates histone H3 'Lys-4' (H3K4me3) in vivo. The activity requires interaction with HSP90alpha. Shows even higher methyltransferase activity on p53/TP53. Monomethylates 'Lys-370' of p53/TP53, leading to decreased DNA-binding activity and subsequent transcriptional regulation activity of p53/TP53. Monomethylates RB1 at 'Lys-860'. The polypeptide is N-lysine methyltransferase SMYD2 (SMYD2) (Sus scrofa (Pig)).